The chain runs to 101 residues: Small ribosomal subunit protein uS14 (101 aa).

Belongs to the universal ribosomal protein uS14 family. Part of the 30S ribosomal subunit. Contacts proteins S3 and S10.

Binds 16S rRNA, required for the assembly of 30S particles and may also be responsible for determining the conformation of the 16S rRNA at the A site. The chain is Small ribosomal subunit protein uS14 from Serratia proteamaculans (strain 568).